The primary structure comprises 468 residues: Secreted triacylglycerol lipase LIP7 (468 aa).

Residues 1–21 form the signal peptide; that stretch reads MFPRQILVFAALGLCFALVAG. A disulfide bridge connects residues Cys-125 and Cys-295. Ser-209 serves as the catalytic Nucleophile. Residues Asp-355 and His-389 contribute to the active site.

It belongs to the AB hydrolase superfamily. Lipase family. Class Lip subfamily.

Its subcellular location is the secreted. The protein localises to the cell wall. The enzyme catalyses a triacylglycerol + H2O = a diacylglycerol + a fatty acid + H(+). The catalysed reaction is a monoacylglycerol + H2O = glycerol + a fatty acid + H(+). It catalyses the reaction a diacylglycerol + H2O = a monoacylglycerol + a fatty acid + H(+). Secreted lipase involved in Dandruff and seborrheic dermatitis (D/SD) probably via lipase-mediated breakdown of sebaceous lipids and release of irritating free fatty acids. Has triacylglycerol lipase activity and is able to hydrolyze triolein. Mostly converts monoolein to di- and triolein, while free fatty acids are only produced in low amounts. The protein is Secreted triacylglycerol lipase LIP7 of Malassezia globosa (strain ATCC MYA-4612 / CBS 7966) (Dandruff-associated fungus).